The following is a 177-amino-acid chain: Large ribosomal subunit protein uL6 (177 aa).

Belongs to the universal ribosomal protein uL6 family. As to quaternary structure, part of the 50S ribosomal subunit.

In terms of biological role, this protein binds to the 23S rRNA, and is important in its secondary structure. It is located near the subunit interface in the base of the L7/L12 stalk, and near the tRNA binding site of the peptidyltransferase center. The sequence is that of Large ribosomal subunit protein uL6 from Psychromonas ingrahamii (strain DSM 17664 / CCUG 51855 / 37).